The chain runs to 135 residues: Ribonuclease P protein component (135 aa).

This sequence belongs to the RnpA family. In terms of assembly, consists of a catalytic RNA component (M1 or rnpB) and a protein subunit.

It carries out the reaction Endonucleolytic cleavage of RNA, removing 5'-extranucleotides from tRNA precursor.. In terms of biological role, RNaseP catalyzes the removal of the 5'-leader sequence from pre-tRNA to produce the mature 5'-terminus. It can also cleave other RNA substrates such as 4.5S RNA. The protein component plays an auxiliary but essential role in vivo by binding to the 5'-leader sequence and broadening the substrate specificity of the ribozyme. In Xylella fastidiosa (strain Temecula1 / ATCC 700964), this protein is Ribonuclease P protein component.